A 397-amino-acid chain; its full sequence is Decapping and exoribonuclease protein (397 aa).

Basic residues predominate over residues 1-10 (MEPRGTKRKA). Residues 1 to 30 (MEPRGTKRKAEKTEVEKPLNKLPRAVPSLR) form a disordered region. Substrate-binding positions include Arg58, Glu101, and 131–133 (WRG). Adenosine 3',5'-bisphosphate is bound at residue Met185. Glu192 is a Mg(2+) binding site. Cys217 and Glu234 together coordinate substrate. Mg(2+) contacts are provided by Glu234, Asp236, Glu253, and Leu254. Asp236 serves as a coordination point for adenosine 3',5'-bisphosphate. An adenosine 3',5'-bisphosphate; inhibitor region spans residues 253-256 (ELKT). Substrate contacts are provided by Lys255 and Gln280. Residue Gln280 participates in adenosine 3',5'-bisphosphate binding. Thr392 is subject to Phosphothreonine. A Phosphoserine modification is found at Ser394.

The protein belongs to the DXO/Dom3Z family. Requires Mg(2+) as cofactor.

Its subcellular location is the nucleus. It carries out the reaction a 5'-end triphospho-ribonucleoside in mRNA + H2O = a 5'-end phospho-ribonucleoside in mRNA + diphosphate + H(+). It catalyses the reaction a 5'-end NAD(+)-phospho-ribonucleoside in mRNA + H2O = a 5'-end phospho-ribonucleoside in mRNA + NAD(+) + H(+). The enzyme catalyses a 5'-end NAD(+)-phospho-ribonucleoside in snoRNA + H2O = a 5'-end phospho-ribonucleoside in snoRNA + NAD(+) + H(+). The catalysed reaction is a 5'-end (N(7)-methyl 5'-triphosphoguanosine)-ribonucleoside-ribonucleotide in mRNA + H2O = a (N(7)-methyl 5'-triphosphoguanosine)-nucleoside + a 5'-end phospho-ribonucleoside in mRNA + H(+). It carries out the reaction a 5'-end FAD-phospho-ribonucleoside in mRNA + H2O = a 5'-end phospho-ribonucleoside in mRNA + FAD + H(+). It catalyses the reaction a 5'-end CoA-ribonucleoside in mRNA + H2O = 3'-dephospho-CoA + a 5'-end phospho-ribonucleoside in mRNA + H(+). Its activity is regulated as follows. The 5'-3' exoribonuclease activity is inhibited by adenosine 3',5'-bisphosphate. In terms of biological role, decapping enzyme for NAD-capped RNAs: specifically hydrolyzes the nicotinamide adenine dinucleotide (NAD) cap from a subset of RNAs by removing the entire NAD moiety from the 5'-end of an NAD-capped RNA. The NAD-cap is present at the 5'-end of some RNAs and snoRNAs. In contrast to the canonical 5'-end N7 methylguanosine (m7G) cap, the NAD cap promotes mRNA decay. Preferentially acts on NAD-capped transcripts in response to environmental stress. Also acts as a non-canonical decapping enzyme that removes the entire cap structure of m7G capped or incompletely capped RNAs and mediates their subsequent degradation. Specifically degrades pre-mRNAs with a defective 5'-end m7G cap and is part of a pre-mRNA capping quality control. Has decapping activity toward incomplete 5'-end m7G cap mRNAs such as unmethylated 5'-end-capped RNA (cap0), while it has no activity toward 2'-O-ribose methylated m7G cap (cap1). In contrast to canonical decapping enzymes DCP2 and NUDT16, which cleave the cap within the triphosphate linkage, the decapping activity releases the entire cap structure GpppN and a 5'-end monophosphate RNA. Also has 5'-3' exoribonuclease activities: The 5'-end monophosphate RNA is then degraded by the 5'-3' exoribonuclease activity, enabling this enzyme to decap and degrade incompletely capped mRNAs. Also possesses RNA 5'-pyrophosphohydrolase activity by hydrolyzing the 5'-end triphosphate to release pyrophosphates. Exhibits decapping activity towards FAD-capped RNAs. Exhibits decapping activity towards dpCoA-capped RNAs in vitro. This chain is Decapping and exoribonuclease protein, found in Mus musculus (Mouse).